The chain runs to 127 residues: Major sperm protein isoform alpha (127 aa).

At Ala2 the chain carries N-acetylalanine. The MSP domain maps to 9–126; sequence DINTQPSQKI…RRKNLPIEYN (118 aa).

In terms of assembly, forms filaments 10 nm wide, with a characteristic substructure repeating axially at 9 nm. As to expression, sperm.

The protein resides in the cell projection. It localises to the pseudopodium. Its subcellular location is the cytoplasm. It is found in the cytoskeleton. Central component in molecular interactions underlying sperm crawling. Forms an extensive filament system that extends from sperm villipoda, along the leading edge of the pseudopod. The sequence is that of Major sperm protein isoform alpha from Ascaris suum (Pig roundworm).